A 387-amino-acid polypeptide reads, in one-letter code: Acetylornithine deacetylase (387 aa).

Histidine 80 contributes to the Zn(2+) binding site. The active site involves aspartate 82. Zn(2+) is bound at residue aspartate 112. The active site involves glutamate 144. Zn(2+) contacts are provided by glutamate 145, glutamate 169, and histidine 355.

This sequence belongs to the peptidase M20A family. ArgE subfamily. Homodimer. It depends on Zn(2+) as a cofactor. Co(2+) serves as cofactor. Requires glutathione as cofactor.

It is found in the cytoplasm. The catalysed reaction is N(2)-acetyl-L-ornithine + H2O = L-ornithine + acetate. The protein operates within amino-acid biosynthesis; L-arginine biosynthesis; L-ornithine from N(2)-acetyl-L-ornithine (linear): step 1/1. Catalyzes the hydrolysis of the amide bond of N(2)-acetylated L-amino acids. Cleaves the acetyl group from N-acetyl-L-ornithine to form L-ornithine, an intermediate in L-arginine biosynthesis pathway, and a branchpoint in the synthesis of polyamines. The chain is Acetylornithine deacetylase from Proteus mirabilis (strain HI4320).